The following is a 298-amino-acid chain: Serine/threonine-protein kinase 1 (298 aa).

Positions 38–276 (FIATRPMFEG…FKSLVSHPWF (239 aa)) constitute a Protein kinase domain. ATP-binding positions include 45-53 (FEGGRNNVF) and K65. D152 serves as the catalytic Proton acceptor.

It belongs to the protein kinase superfamily. Ser/Thr protein kinase family.

The protein localises to the virion. Its subcellular location is the host cytoplasm. It carries out the reaction L-seryl-[protein] + ATP = O-phospho-L-seryl-[protein] + ADP + H(+). It catalyses the reaction L-threonyl-[protein] + ATP = O-phospho-L-threonyl-[protein] + ADP + H(+). In terms of biological role, essential for viral replication. It may mediate the virus progression through DNA replication. The sequence is that of Serine/threonine-protein kinase 1 from African swine fever virus (strain Badajoz 1971 Vero-adapted) (Ba71V).